Consider the following 256-residue polypeptide: Protein FixA (256 aa).

The protein belongs to the ETF beta-subunit/FixA family. Heterodimer of FixA and FixB.

It participates in amine and polyamine metabolism; carnitine metabolism. Functionally, required for anaerobic carnitine reduction. May bring reductant to CaiA. The sequence is that of Protein FixA from Salmonella agona (strain SL483).